The chain runs to 462 residues: Cysteine--tRNA ligase (462 aa).

A Zn(2+)-binding site is contributed by C28. The 'HIGH' region motif lies at 30-40 (MTVYDYCHIGH). Zn(2+)-binding residues include C209, H234, and E238. The 'KMSKS' region motif lies at 266 to 270 (KMSKS). K269 contributes to the ATP binding site.

This sequence belongs to the class-I aminoacyl-tRNA synthetase family. As to quaternary structure, monomer. Requires Zn(2+) as cofactor.

It is found in the cytoplasm. It carries out the reaction tRNA(Cys) + L-cysteine + ATP = L-cysteinyl-tRNA(Cys) + AMP + diphosphate. The protein is Cysteine--tRNA ligase of Pseudomonas fluorescens (strain SBW25).